A 172-amino-acid chain; its full sequence is Lipoprotein signal peptidase (172 aa).

A run of 4 helical transmembrane segments spans residues 12 to 32 (TSAA…VILF), 43 to 63 (VFAY…LVYN), 77 to 97 (WQRW…CYLL), and 102 to 122 (GQKM…GNVI). Catalysis depends on residues Asp-132 and Asp-150. Residues 142–162 (HWPAFNLADSAITVGAVLLVL) form a helical membrane-spanning segment.

It belongs to the peptidase A8 family.

It is found in the cell inner membrane. The catalysed reaction is Release of signal peptides from bacterial membrane prolipoproteins. Hydrolyzes -Xaa-Yaa-Zaa-|-(S,diacylglyceryl)Cys-, in which Xaa is hydrophobic (preferably Leu), and Yaa (Ala or Ser) and Zaa (Gly or Ala) have small, neutral side chains.. Its pathway is protein modification; lipoprotein biosynthesis (signal peptide cleavage). This protein specifically catalyzes the removal of signal peptides from prolipoproteins. This chain is Lipoprotein signal peptidase, found in Paraburkholderia phytofirmans (strain DSM 17436 / LMG 22146 / PsJN) (Burkholderia phytofirmans).